Here is a 325-residue protein sequence, read N- to C-terminus: tRNA dimethylallyltransferase (325 aa).

Gly21–Ser28 serves as a coordination point for ATP. Position 23 to 28 (Thr23 to Ser28) interacts with substrate. The segment at Gln166–Arg170 is interaction with substrate tRNA.

This sequence belongs to the IPP transferase family. In terms of assembly, monomer. Mg(2+) serves as cofactor.

It catalyses the reaction adenosine(37) in tRNA + dimethylallyl diphosphate = N(6)-dimethylallyladenosine(37) in tRNA + diphosphate. Catalyzes the transfer of a dimethylallyl group onto the adenine at position 37 in tRNAs that read codons beginning with uridine, leading to the formation of N6-(dimethylallyl)adenosine (i(6)A). This Acidiphilium cryptum (strain JF-5) protein is tRNA dimethylallyltransferase.